A 538-amino-acid chain; its full sequence is Bifunctional purine biosynthesis protein PurH (538 aa).

One can recognise an MGS-like domain in the interval 6–158 (KHIPAPDLHR…KNHAYVATVV (153 aa)).

It belongs to the PurH family.

The enzyme catalyses (6R)-10-formyltetrahydrofolate + 5-amino-1-(5-phospho-beta-D-ribosyl)imidazole-4-carboxamide = 5-formamido-1-(5-phospho-D-ribosyl)imidazole-4-carboxamide + (6S)-5,6,7,8-tetrahydrofolate. The catalysed reaction is IMP + H2O = 5-formamido-1-(5-phospho-D-ribosyl)imidazole-4-carboxamide. Its pathway is purine metabolism; IMP biosynthesis via de novo pathway; 5-formamido-1-(5-phospho-D-ribosyl)imidazole-4-carboxamide from 5-amino-1-(5-phospho-D-ribosyl)imidazole-4-carboxamide (10-formyl THF route): step 1/1. It participates in purine metabolism; IMP biosynthesis via de novo pathway; IMP from 5-formamido-1-(5-phospho-D-ribosyl)imidazole-4-carboxamide: step 1/1. This is Bifunctional purine biosynthesis protein PurH from Brucella ovis (strain ATCC 25840 / 63/290 / NCTC 10512).